The primary structure comprises 481 residues: UDP-N-acetylmuramoyl-L-alanyl-D-glutamate--L-lysine ligase (481 aa).

Serine 42 lines the UDP-N-acetyl-alpha-D-muramoyl-L-alanyl-D-glutamate pocket. Position 118-124 (118-124) interacts with ATP; that stretch reads GTKGKTT. Residues glutamine 158, 160 to 161, serine 187, and arginine 195 contribute to the UDP-N-acetyl-alpha-D-muramoyl-L-alanyl-D-glutamate site; that span reads TT. Position 229 is an N6-carboxylysine (lysine 229). Positions 404–407 match the L-lysine recognition motif motif; sequence DDPN.

Belongs to the MurCDEF family. MurE subfamily. Carboxylation is probably crucial for Mg(2+) binding and, consequently, for the gamma-phosphate positioning of ATP.

It localises to the cytoplasm. The catalysed reaction is UDP-N-acetyl-alpha-D-muramoyl-L-alanyl-D-glutamate + L-lysine + ATP = UDP-N-acetyl-alpha-D-muramoyl-L-alanyl-gamma-D-glutamyl-L-lysine + ADP + phosphate + H(+). The protein operates within cell wall biogenesis; peptidoglycan biosynthesis. Its function is as follows. Catalyzes the addition of L-lysine to the nucleotide precursor UDP-N-acetylmuramoyl-L-alanyl-D-glutamate (UMAG) in the biosynthesis of bacterial cell-wall peptidoglycan. This is UDP-N-acetylmuramoyl-L-alanyl-D-glutamate--L-lysine ligase from Streptococcus pyogenes serotype M3 (strain SSI-1).